We begin with the raw amino-acid sequence, 280 residues long: H-2 class II histocompatibility antigen gamma chain (280 aa).

The Cytoplasmic portion of the chain corresponds to 1 to 30 (MDDQRDLISNHEQLPILGQRARAPESNCNR). Serine 9 is modified (phosphoserine). Residues 31–56 (GVLYTSVSVLVALLLAGQATTAYFLY) form a helical; Signal-anchor for type II membrane protein membrane-spanning segment. Residues 57-280 (QQQGRLDKLT…TKQDMGQMFL (224 aa)) lie on the Extracellular side of the membrane. Asparagine 114 and asparagine 120 each carry an N-linked (GlcNAc...) asparagine glycan. In terms of domain architecture, Thyroglobulin type-1 spans 194–255 (LTKCQEEVSH…HTKSRGRHNC (62 aa)). Disulfide bonds link cysteine 197/cysteine 216, cysteine 227/cysteine 234, and cysteine 236/cysteine 255. The disordered stretch occupies residues 246–268 (HTKSRGRHNCSEPLDMEDPSSGL). O-linked (Xyl...) (chondroitin sulfate) serine glycosylation occurs at serine 266.

Nonamer composed of three alpha/beta/gamma heterotrimers. Interacts with CD44; this complex is essential for the MIF-induced signaling cascade that results in B cell survival. As to quaternary structure, interacts with the mature form of CTSL; the complex survive in neutral pH environment.

The protein localises to the late endosome. It localises to the lysosome. The protein resides in the cell membrane. It is found in the endoplasmic reticulum membrane. Its subcellular location is the golgi apparatus. The protein localises to the trans-Golgi network. It localises to the endosome. The protein resides in the secreted. In terms of biological role, plays a critical role in MHC class II antigen processing by stabilizing peptide-free class II alpha/beta heterodimers in a complex soon after their synthesis and directing transport of the complex from the endoplasmic reticulum to compartments where peptide loading of class II takes place. Enhance also the stimulation of T-cell responses through interaction with CD44. Binds to the peptide-binding site of MHC class II alpha/beta heterodimers forming an alpha-beta-CLIP complex, thereby preventing the loading of antigenic peptides to the MHC class II complex until its release by HLA-DM in the endosome. Its function is as follows. Stabilizes the conformation of mature CTSL by binding to its active site and serving as a chaperone to help maintain a pool of mature enzyme in endocytic compartments and extracellular space of antigen-presenting cells (APCs). In Rattus norvegicus (Rat), this protein is H-2 class II histocompatibility antigen gamma chain.